The chain runs to 750 residues: Photosystem I P700 chlorophyll a apoprotein A1 (750 aa).

Transmembrane regions (helical) follow at residues 70–93, 156–179, 195–219, 291–309, 346–369, 385–411, 433–455, and 531–549; these read VFSA…FHGA, LYCT…FHYH, LNHH…HVSL, IAHH…GHMY, WHAQ…HHMY, LSLF…IFMV, AIIS…LYIH, and FLVH…LILL. Residues Cys-573 and Cys-582 each coordinate [4Fe-4S] cluster. 2 consecutive transmembrane segments (helical) span residues 589-610 and 664-686; these read HVFL…HFSW and LSAY…MFLF. His-675 provides a ligand contact to chlorophyll a'. Positions 683 and 691 each coordinate chlorophyll a. Residue Trp-692 participates in phylloquinone binding. A helical transmembrane segment spans residues 724 to 744; it reads AVGVTHYLLGGIATTWAFFLA.

This sequence belongs to the PsaA/PsaB family. In terms of assembly, the PsaA/B heterodimer binds the P700 chlorophyll special pair and subsequent electron acceptors. PSI consists of a core antenna complex that captures photons, and an electron transfer chain that converts photonic excitation into a charge separation. The eukaryotic PSI reaction center is composed of at least 11 subunits. The cofactor is P700 is a chlorophyll a/chlorophyll a' dimer, A0 is one or more chlorophyll a, A1 is one or both phylloquinones and FX is a shared 4Fe-4S iron-sulfur center..

Its subcellular location is the plastid. The protein localises to the chloroplast thylakoid membrane. It catalyses the reaction reduced [plastocyanin] + hnu + oxidized [2Fe-2S]-[ferredoxin] = oxidized [plastocyanin] + reduced [2Fe-2S]-[ferredoxin]. Its function is as follows. PsaA and PsaB bind P700, the primary electron donor of photosystem I (PSI), as well as the electron acceptors A0, A1 and FX. PSI is a plastocyanin-ferredoxin oxidoreductase, converting photonic excitation into a charge separation, which transfers an electron from the donor P700 chlorophyll pair to the spectroscopically characterized acceptors A0, A1, FX, FA and FB in turn. Oxidized P700 is reduced on the lumenal side of the thylakoid membrane by plastocyanin. The protein is Photosystem I P700 chlorophyll a apoprotein A1 of Morus indica (Mulberry).